Here is a 200-residue protein sequence, read N- to C-terminus: Glycerol-3-phosphate acyltransferase (200 aa).

The next 5 helical transmembrane spans lie at 2–22, 51–71, 84–104, 114–134, and 159–179; these read FNIP…AVIV, KAAA…VLLA, AIAA…FFGF, LGVL…IWLV, and FFMP…LVLF.

This sequence belongs to the PlsY family. As to quaternary structure, probably interacts with PlsX.

It is found in the cell inner membrane. It catalyses the reaction an acyl phosphate + sn-glycerol 3-phosphate = a 1-acyl-sn-glycero-3-phosphate + phosphate. Its pathway is lipid metabolism; phospholipid metabolism. Functionally, catalyzes the transfer of an acyl group from acyl-phosphate (acyl-PO(4)) to glycerol-3-phosphate (G3P) to form lysophosphatidic acid (LPA). This enzyme utilizes acyl-phosphate as fatty acyl donor, but not acyl-CoA or acyl-ACP. This chain is Glycerol-3-phosphate acyltransferase, found in Neisseria meningitidis serogroup B (strain ATCC BAA-335 / MC58).